A 496-amino-acid chain; its full sequence is Probable cytosol aminopeptidase (496 aa).

Positions 261 and 266 each coordinate Mn(2+). Lys-273 is an active-site residue. Asp-284, Asp-343, and Glu-345 together coordinate Mn(2+). The active site involves Arg-347.

This sequence belongs to the peptidase M17 family. It depends on Mn(2+) as a cofactor.

The protein localises to the cytoplasm. It carries out the reaction Release of an N-terminal amino acid, Xaa-|-Yaa-, in which Xaa is preferably Leu, but may be other amino acids including Pro although not Arg or Lys, and Yaa may be Pro. Amino acid amides and methyl esters are also readily hydrolyzed, but rates on arylamides are exceedingly low.. The catalysed reaction is Release of an N-terminal amino acid, preferentially leucine, but not glutamic or aspartic acids.. Its function is as follows. Presumably involved in the processing and regular turnover of intracellular proteins. Catalyzes the removal of unsubstituted N-terminal amino acids from various peptides. This chain is Probable cytosol aminopeptidase, found in Bacillus licheniformis (strain ATCC 14580 / DSM 13 / JCM 2505 / CCUG 7422 / NBRC 12200 / NCIMB 9375 / NCTC 10341 / NRRL NRS-1264 / Gibson 46).